We begin with the raw amino-acid sequence, 131 residues long: Small ribosomal subunit protein uS11 (131 aa).

This sequence belongs to the universal ribosomal protein uS11 family. Part of the 30S ribosomal subunit. Interacts with proteins S7 and S18. Binds to IF-3.

Its function is as follows. Located on the platform of the 30S subunit, it bridges several disparate RNA helices of the 16S rRNA. Forms part of the Shine-Dalgarno cleft in the 70S ribosome. The protein is Small ribosomal subunit protein uS11 of Helicobacter pylori (strain G27).